The primary structure comprises 202 residues: Ras-related protein Rab-1A (202 aa).

Residues 15 to 23 (GDSGVGKSC), 33 to 40 (YSESFIST), 63 to 67 (DTAGQ), 121 to 124 (NKSD), and 151 to 153 (SAK) contribute to the GTP site. Positions 37–45 (FISTIGVDF) match the Effector region motif. Residues 180–202 (QTVDKNKVVPGSSAPISPKSGCC) form a disordered region. 2 S-geranylgeranyl cysteine lipidation sites follow: cysteine 201 and cysteine 202.

Belongs to the small GTPase superfamily. Rab family.

Its subcellular location is the cell membrane. This Dictyostelium discoideum (Social amoeba) protein is Ras-related protein Rab-1A (rab1A).